The sequence spans 360 residues: Glutamate 5-kinase (360 aa).

Lys-7 is an ATP binding site. Substrate-binding residues include Ser-47, Asp-134, and Asn-146. ATP-binding positions include 166–167 (TD) and 208–214 (TGGIKTK). A PUA domain is found at 273-344 (VGEIHLDDGA…IGINSRSETT (72 aa)).

The protein belongs to the glutamate 5-kinase family.

The protein localises to the cytoplasm. It catalyses the reaction L-glutamate + ATP = L-glutamyl 5-phosphate + ADP. The protein operates within amino-acid biosynthesis; L-proline biosynthesis; L-glutamate 5-semialdehyde from L-glutamate: step 1/2. Its function is as follows. Catalyzes the transfer of a phosphate group to glutamate to form L-glutamate 5-phosphate. This is Glutamate 5-kinase from Prochlorococcus marinus (strain NATL2A).